Reading from the N-terminus, the 68-residue chain is DNA-directed RNA polymerase subunit omega (68 aa).

This sequence belongs to the RNA polymerase subunit omega family. As to quaternary structure, the RNAP catalytic core consists of 2 alpha, 1 beta, 1 beta' and 1 omega subunit. When a sigma factor is associated with the core the holoenzyme is formed, which can initiate transcription.

It catalyses the reaction RNA(n) + a ribonucleoside 5'-triphosphate = RNA(n+1) + diphosphate. Its function is as follows. Promotes RNA polymerase assembly. Latches the N- and C-terminal regions of the beta' subunit thereby facilitating its interaction with the beta and alpha subunits. The protein is DNA-directed RNA polymerase subunit omega of Citrifermentans bemidjiense (strain ATCC BAA-1014 / DSM 16622 / JCM 12645 / Bem) (Geobacter bemidjiensis).